The chain runs to 84 residues: Small ribosomal subunit protein uS17c (84 aa).

The protein belongs to the universal ribosomal protein uS17 family. In terms of assembly, part of the 30S ribosomal subunit.

It is found in the plastid. It localises to the chloroplast. Its function is as follows. One of the primary rRNA binding proteins, it binds specifically to the 5'-end of 16S ribosomal RNA. The sequence is that of Small ribosomal subunit protein uS17c (rps17) from Thalassiosira pseudonana (Marine diatom).